The primary structure comprises 681 residues: Sodium-dependent phosphate transporter 1 (681 aa).

Transmembrane regions (helical) follow at residues 25 to 45 (YLWM…SVGA), 66 to 86 (ACIL…AKVS), 106 to 126 (LMAG…VASF), 162 to 182 (IVMS…ILFF), 207 to 227 (ACTV…LLGF), and 234 to 254 (GTIL…WFFV). S269 and S273 each carry phosphoserine. The interval 269–296 (SPSESPLMEKKNSLKEDHEETKLSVSDI) is disordered. A compositionally biased stretch (basic and acidic residues) spans 275-290 (LMEKKNSLKEDHEETK). The next 4 membrane-spanning stretches (helical) occupy residues 515–535 (VSLL…FAHG), 562–582 (VATP…GLWV), 604–624 (FSIE…GLPI), and 654–674 (IFMA…AIMA). The tract at residues 554 to 562 (DTGDVSSKV) is a.

This sequence belongs to the inorganic phosphate transporter (PiT) (TC 2.A.20) family.

It is found in the cell membrane. It catalyses the reaction 2 Na(+)(out) + phosphate(out) = 2 Na(+)(in) + phosphate(in). In terms of biological role, sodium-phosphate symporter which preferentially transports the monovalent form of phosphate with a stoichiometry of two sodium ions per phosphate ion. May play a role in extracellular matrix and cartilage calcification as well as in vascular calcification. Essential for cell proliferation but this function is independent of its phosphate transporter activity. In Felis catus (Cat), this protein is Sodium-dependent phosphate transporter 1 (Slc20a1).